The following is a 126-amino-acid chain: LWamide neuropeptides (126 aa).

Residues 1–2 constitute a propeptide, 1; it reads KR. A disordered region spans residues 1-126; that stretch reads KRQQPGLWGR…KSAIPKAKPQ (126 aa). W8 is subject to Tryptophan amide. The propeptide at 11-15 is 2; it reads SADPQ. 2 positions are modified to tryptophan amide: W20 and W29. Positions 32-36 are cleaved as a propeptide — 2; it reads SADPQ. A tryptophan amide mark is found at W41 and W50. A propeptide spans 53-57 (2); the sequence is SADPQ. W62 and W71 each carry tryptophan amide. A propeptide spans 74–78 (2); that stretch reads SADPQ. W83 is modified (tryptophan amide). The propeptide at 86 to 93 is 3; it reads SAGSGKRQ. W99 is modified (tryptophan amide). The propeptide at 102-126 is 4; it reads SAEPPQYKELEDLKQKSAIPKAKPQ. The span at 107 to 116 shows a compositional bias: basic and acidic residues; sequence QYKELEDLKQ.

Belongs to the LWamide neuropeptide family.

The protein localises to the secreted. Its function is as follows. Metamorphosin A may be part of an internal signaling system involved in control of metamorphosis. The sequence is that of LWamide neuropeptides from Anemonia sulcata (Mediterranean snakelocks sea anemone).